The chain runs to 473 residues: GTPase Der (473 aa).

2 EngA-type G domains span residues 3–167 (FTVA…GEDR) and 203–378 (LRVA…KVWN). GTP is bound by residues 9–16 (GRPNVGKS), 56–60 (DTAGL), 119–122 (NKSE), 209–216 (GRPNAGKS), 256–260 (DTAGM), and 321–324 (NKWD). The KH-like domain occupies 379–463 (KRISTARLNR…PIRIHFRSPD (85 aa)).

This sequence belongs to the TRAFAC class TrmE-Era-EngA-EngB-Septin-like GTPase superfamily. EngA (Der) GTPase family. Associates with the 50S ribosomal subunit.

GTPase that plays an essential role in the late steps of ribosome biogenesis. This chain is GTPase Der, found in Rhizobium johnstonii (strain DSM 114642 / LMG 32736 / 3841) (Rhizobium leguminosarum bv. viciae).